We begin with the raw amino-acid sequence, 152 residues long: Superoxide dismutase [Cu-Zn] (152 aa).

3 residues coordinate Cu cation: His-45, His-47, and His-62. The cysteines at positions 56 and 145 are disulfide-linked. Positions 62, 70, 79, and 82 each coordinate Zn(2+). Residue His-119 coordinates Cu cation.

It belongs to the Cu-Zn superoxide dismutase family. In terms of assembly, homodimer. Cu cation is required as a cofactor. It depends on Zn(2+) as a cofactor.

It is found in the cytoplasm. The enzyme catalyses 2 superoxide + 2 H(+) = H2O2 + O2. Its function is as follows. Destroys radicals which are normally produced within the cells and which are toxic to biological systems. In Ipomoea batatas (Sweet potato), this protein is Superoxide dismutase [Cu-Zn] (SODCC).